We begin with the raw amino-acid sequence, 340 residues long: Glyceraldehyde-3-phosphate dehydrogenase (340 aa).

NAD(+) is bound by residues 11–12 (TI) and Gly-109. Residues Cys-123 and Cys-149 are joined by a disulfide bond. 138-140 (SCN) lines the D-glyceraldehyde 3-phosphate pocket. Catalysis depends on Cys-139, which acts as the Nucleophile. Position 167 (Arg-167) interacts with NAD(+). A D-glyceraldehyde 3-phosphate-binding site is contributed by 193-194 (HA). Residue Gln-300 participates in NAD(+) binding.

Belongs to the glyceraldehyde-3-phosphate dehydrogenase family. In terms of assembly, homotetramer.

It localises to the cytoplasm. It catalyses the reaction D-glyceraldehyde 3-phosphate + phosphate + NADP(+) = (2R)-3-phospho-glyceroyl phosphate + NADPH + H(+). The catalysed reaction is D-glyceraldehyde 3-phosphate + phosphate + NAD(+) = (2R)-3-phospho-glyceroyl phosphate + NADH + H(+). It functions in the pathway carbohydrate degradation; glycolysis; pyruvate from D-glyceraldehyde 3-phosphate: step 1/5. In terms of biological role, can use both NAD and NADP as cofactors, but exhibits a marked preference for NADP. This is Glyceraldehyde-3-phosphate dehydrogenase (gap) from Saccharolobus solfataricus (strain ATCC 35092 / DSM 1617 / JCM 11322 / P2) (Sulfolobus solfataricus).